The chain runs to 116 residues: Beta-2-microglobulin (116 aa).

The first 19 residues, 1 to 19, serve as a signal peptide directing secretion; sequence MKFLLSFVVLAVFSASAFA. Residues 24–111 enclose the Ig-like C1-type domain; sequence PKIQVYSRNP…RHLKETKNIS (88 aa). A disulfide bridge connects residues C44 and C99.

This sequence belongs to the beta-2-microglobulin family. In terms of assembly, heterodimer of an alpha chain and a beta chain. Beta-2-microglobulin is the beta-chain of major histocompatibility complex class I molecules.

It localises to the secreted. In terms of biological role, component of the class I major histocompatibility complex (MHC). Involved in the presentation of peptide antigens to the immune system. The polypeptide is Beta-2-microglobulin (b2m) (Ictalurus punctatus (Channel catfish)).